Reading from the N-terminus, the 308-residue chain is Ribonuclease H2 subunit B (308 aa).

Residue Ala2 is modified to N-acetylalanine. Lys292 is subject to N6-acetyllysine. Phosphoserine is present on Ser293.

It belongs to the RNase H2 subunit B family. As to quaternary structure, the RNase H2 complex is a heterotrimer composed of the catalytic subunit RNASEH2A and the non-catalytic subunits RNASEH2B and RNASEH2C.

Its subcellular location is the nucleus. In terms of biological role, non catalytic subunit of RNase H2, an endonuclease that specifically degrades the RNA of RNA:DNA hybrids. Participates in DNA replication, possibly by mediating the removal of lagging-strand Okazaki fragment RNA primers during DNA replication. Mediates the excision of single ribonucleotides from DNA:RNA duplexes. This Mus musculus (Mouse) protein is Ribonuclease H2 subunit B (Rnaseh2b).